Consider the following 497-residue polypeptide: 3-octaprenyl-4-hydroxybenzoate carboxy-lyase (497 aa).

Asn-175 contributes to the Mn(2+) binding site. Prenylated FMN-binding positions include 178–180 (IYR), 192–194 (RWL), and 197–198 (RG). Glu-241 contributes to the Mn(2+) binding site. The active-site Proton donor is Asp-290.

Belongs to the UbiD family. As to quaternary structure, homohexamer. Requires prenylated FMN as cofactor. The cofactor is Mn(2+).

The protein localises to the cell membrane. The enzyme catalyses a 4-hydroxy-3-(all-trans-polyprenyl)benzoate + H(+) = a 2-(all-trans-polyprenyl)phenol + CO2. It functions in the pathway cofactor biosynthesis; ubiquinone biosynthesis. Its function is as follows. Catalyzes the decarboxylation of 3-octaprenyl-4-hydroxy benzoate to 2-octaprenylphenol, an intermediate step in ubiquinone biosynthesis. The sequence is that of 3-octaprenyl-4-hydroxybenzoate carboxy-lyase from Shigella sonnei (strain Ss046).